The chain runs to 1159 residues: ATP-dependent helicase/deoxyribonuclease subunit B (1159 aa).

Positions 1 to 401 (MSIRFVYGRS…LLKNWSYESV (401 aa)) constitute a UvrD-like helicase ATP-binding domain. 8–15 (GRSGTGKS) is a binding site for ATP. A UvrD-like helicase C-terminal domain is found at 279–582 (PYRFKGNLEL…NIGDIARIKG (304 aa)). [4Fe-4S] cluster is bound by residues C787, C1106, C1109, and C1115.

It belongs to the helicase family. AddB/RexB type 1 subfamily. Heterodimer of AddA and AddB. The cofactor is Mg(2+). [4Fe-4S] cluster serves as cofactor.

In terms of biological role, the heterodimer acts as both an ATP-dependent DNA helicase and an ATP-dependent, dual-direction single-stranded exonuclease. Recognizes the chi site generating a DNA molecule suitable for the initiation of homologous recombination. The AddB subunit has 5' -&gt; 3' nuclease activity but not helicase activity. The sequence is that of ATP-dependent helicase/deoxyribonuclease subunit B from Clostridium beijerinckii (strain ATCC 51743 / NCIMB 8052) (Clostridium acetobutylicum).